Consider the following 532-residue polypeptide: 56 kDa type-specific antigen (532 aa).

A signal peptide spans 1–22 (MKKIMLIASAMSALSLPFSASA). The chain crosses the membrane as a helical span at residues 67–87 (LTTGLPFGGTLAAGMTIAPGF). 2 disordered regions span residues 113 to 140 (KGEI…PQPT) and 400 to 426 (QQEE…SKEG). Positions 403 to 413 (EDAKNQGKGDC) are enriched in basic and acidic residues. A helical transmembrane segment spans residues 480–500 (TGMVASGALGVAINAAEGVCV).

It localises to the cell membrane. May be an adherent factor for rickettsial adsorption to the host-cell surface and a determinant of virulence of individual rickettsial strain. It is the major outer membrane protein. This is 56 kDa type-specific antigen from Orientia tsutsugamushi (Rickettsia tsutsugamushi).